The following is a 379-amino-acid chain: MSLSGHTHTKEEVQAEVEAGEVQCPALCHQPVLVQECLTLLEPAIVGISRGADSTRDGAGAFFIDGTLGDGGHTQAFLHAYPALRALGVEIDPSMLARARARLTPFGKRLRYVLGWSDVFFASAYASAPASPATGRTAAGAAGVPGAYPAPQAVLLDLGISFFHYRGAMRGFSFAEEHMLDMRLDPQASQTAADLLNRLPQARLAQLFFEGGEERYARRIAQAVCAQRRQAPFCSARAFAEVVARVVPPMRTARFGKRRGVLGVLPKLHPATKAFQALRIAVNRELERLPRLLTAAFTALAPGGRLAVISFHSREDRIVKVHFRHWAKRCSCPARVPICSCGGVARASLITKKPLVPSCVERAANAASRSATLRVIEKR.

Residues Gly71–His73, Glu90, Asp157, and His164 each bind S-adenosyl-L-methionine.

This sequence belongs to the methyltransferase superfamily. RsmH family.

Its subcellular location is the cytoplasm. The enzyme catalyses cytidine(1402) in 16S rRNA + S-adenosyl-L-methionine = N(4)-methylcytidine(1402) in 16S rRNA + S-adenosyl-L-homocysteine + H(+). Its function is as follows. Specifically methylates the N4 position of cytidine in position 1402 (C1402) of 16S rRNA. This chain is Ribosomal RNA small subunit methyltransferase H, found in Treponema pallidum (strain Nichols).